A 490-amino-acid polypeptide reads, in one-letter code: Probable cytochrome P450 308a1 (490 aa).

A heme-binding site is contributed by cysteine 431.

This sequence belongs to the cytochrome P450 family. It depends on heme as a cofactor.

It localises to the endoplasmic reticulum membrane. Its subcellular location is the microsome membrane. Its function is as follows. May be involved in the metabolism of insect hormones and in the breakdown of synthetic insecticides. This Drosophila melanogaster (Fruit fly) protein is Probable cytochrome P450 308a1 (Cyp308a1).